The following is a 410-amino-acid chain: Elongation factor Tu, chloroplastic (410 aa).

One can recognise a tr-type G domain in the interval 10 to 214; it reads KPHINIGTIG…QVDKYIPTPQ (205 aa). Residues 19 to 26 are G1; the sequence is GHVDHGKT. Position 19 to 26 (19 to 26) interacts with GTP; the sequence is GHVDHGKT. Threonine 26 is a binding site for Mg(2+). The tract at residues 60–64 is G2; it reads GITIN. The tract at residues 81–84 is G3; sequence DCPG. Residues 81-85 and 136-139 each bind GTP; these read DCPGH and NKED. Residues 136 to 139 form a G4 region; that stretch reads NKED. Residues 174-176 form a G5 region; sequence SAL.

It belongs to the TRAFAC class translation factor GTPase superfamily. Classic translation factor GTPase family. EF-Tu/EF-1A subfamily.

It localises to the plastid. The protein localises to the chloroplast. The catalysed reaction is GTP + H2O = GDP + phosphate + H(+). Its function is as follows. GTP hydrolase that promotes the GTP-dependent binding of aminoacyl-tRNA to the A-site of ribosomes during protein biosynthesis. In Mesostigma viride (Green alga), this protein is Elongation factor Tu, chloroplastic (tufA).